The chain runs to 451 residues: Adenylyltransferase and sulfurtransferase MOCS3 (451 aa).

A disordered region spans residues 42 to 62 (GEDSDEAEESSNDMPTPQTKL). The segment covering 43–52 (EDSDEAEESS) has biased composition (acidic residues). Threonine 60 carries the post-translational modification Phosphothreonine. Residues glycine 99, aspartate 120, 127–131 (SNLHR), lysine 144, and 188–189 (DN) each bind ATP. Zn(2+) contacts are provided by cysteine 229 and cysteine 232. Residue cysteine 246 is the Glycyl thioester intermediate; for adenylyltransferase activity of the active site. Positions 304 and 307 each coordinate Zn(2+). The 97-residue stretch at 353–449 (QSQPHLLLDV…WTGSVDATFP (97 aa)) folds into the Rhodanese domain. The Cysteine persulfide intermediate; for sulfurtransferase activity role is filled by cysteine 408.

This sequence in the N-terminal section; belongs to the HesA/MoeB/ThiF family. UBA4 subfamily. Requires Zn(2+) as cofactor.

It localises to the cytoplasm. It is found in the cytosol. It catalyses the reaction [molybdopterin-synthase sulfur-carrier protein]-C-terminal Gly-Gly + ATP + H(+) = [molybdopterin-synthase sulfur-carrier protein]-C-terminal Gly-Gly-AMP + diphosphate. It carries out the reaction [molybdopterin-synthase sulfur-carrier protein]-C-terminal Gly-Gly-AMP + S-sulfanyl-L-cysteinyl-[cysteine desulfurase] + AH2 = [molybdopterin-synthase sulfur-carrier protein]-C-terminal-Gly-aminoethanethioate + L-cysteinyl-[cysteine desulfurase] + A + AMP + 2 H(+). Its pathway is tRNA modification; 5-methoxycarbonylmethyl-2-thiouridine-tRNA biosynthesis. It participates in cofactor biosynthesis; molybdopterin biosynthesis. Functionally, plays a central role in 2-thiolation of mcm(5)S(2)U at tRNA wobble positions of cytosolic tRNA(Lys), tRNA(Glu) and tRNA(Gln). Also essential during biosynthesis of the molybdenum cofactor. Acts by mediating the C-terminal thiocarboxylation of sulfur carriers URM1 and MOCS2A. Its N-terminus first activates URM1 and MOCS2A as acyl-adenylates (-COAMP), then the persulfide sulfur on the catalytic cysteine is transferred to URM1 and MOCS2A to form thiocarboxylation (-COSH) of their C-terminus. The reaction probably involves hydrogen sulfide that is generated from the persulfide intermediate and that acts as a nucleophile towards URM1 and MOCS2A. Subsequently, a transient disulfide bond is formed. Does not use thiosulfate as sulfur donor; NFS1 probably acting as a sulfur donor for thiocarboxylation reactions. In Drosophila persimilis (Fruit fly), this protein is Adenylyltransferase and sulfurtransferase MOCS3.